A 277-amino-acid chain; its full sequence is Thiazole synthase (277 aa).

K107 (schiff-base intermediate with DXP) is an active-site residue. 1-deoxy-D-xylulose 5-phosphate is bound by residues G168, 194 to 195, and 216 to 217; these read AG and AS.

Belongs to the ThiG family. As to quaternary structure, homotetramer. Forms heterodimers with either ThiH or ThiS.

The protein resides in the cytoplasm. It carries out the reaction [ThiS sulfur-carrier protein]-C-terminal-Gly-aminoethanethioate + 2-iminoacetate + 1-deoxy-D-xylulose 5-phosphate = [ThiS sulfur-carrier protein]-C-terminal Gly-Gly + 2-[(2R,5Z)-2-carboxy-4-methylthiazol-5(2H)-ylidene]ethyl phosphate + 2 H2O + H(+). The protein operates within cofactor biosynthesis; thiamine diphosphate biosynthesis. Catalyzes the rearrangement of 1-deoxy-D-xylulose 5-phosphate (DXP) to produce the thiazole phosphate moiety of thiamine. Sulfur is provided by the thiocarboxylate moiety of the carrier protein ThiS. In vitro, sulfur can be provided by H(2)S. In Cutibacterium acnes (strain DSM 16379 / KPA171202) (Propionibacterium acnes), this protein is Thiazole synthase.